Consider the following 448-residue polypeptide: Methionine aminopeptidase 2 (448 aa).

Residues Met1–Ala17 are compositionally biased toward low complexity. The interval Met1 to Thr87 is disordered. A compositionally biased stretch (basic and acidic residues) spans Lys21 to Gly34. A compositionally biased stretch (acidic residues) spans Pro35 to Thr46. Over residues Lys55 to Thr71 the composition is skewed to basic residues. Substrate is bound at residue His200. A divalent metal cation contacts are provided by Asp220, Asp231, and His300. His308 lines the substrate pocket. Residues Glu334 and Glu429 each contribute to the a divalent metal cation site.

It belongs to the peptidase M24A family. Methionine aminopeptidase eukaryotic type 2 subfamily. Co(2+) is required as a cofactor. The cofactor is Zn(2+). Mn(2+) serves as cofactor. It depends on Fe(2+) as a cofactor.

The protein resides in the cytoplasm. It carries out the reaction Release of N-terminal amino acids, preferentially methionine, from peptides and arylamides.. Cotranslationally removes the N-terminal methionine from nascent proteins. The N-terminal methionine is often cleaved when the second residue in the primary sequence is small and uncharged (Met-Ala-, Cys, Gly, Pro, Ser, Thr, or Val). The chain is Methionine aminopeptidase 2 from Malassezia globosa (strain ATCC MYA-4612 / CBS 7966) (Dandruff-associated fungus).